Consider the following 712-residue polypeptide: TIR domain-containing adapter molecule 1 (712 aa).

The TRIF-NTD stretch occupies residues 1-153 (MACTGPSLPS…CGWDIAGDPG (153 aa)). A TRAF6-binding motif is present at residues 84 to 91 (EDPEEPPD). The pLxIS motif signature appears at 207-210 (LEIS). Residue serine 210 is modified to Phosphoserine; by TBK1. Disordered regions lie at residues 216 to 316 (PFLS…SLPL) and 336 to 384 (LSVE…LFPS). Lysine 229 is covalently cross-linked (Glycyl lysine isopeptide (Lys-Gly) (interchain with G-Cter in ubiquitin)). The TRAF6-binding motif lies at 248 to 255 (QEPEEMSW). A compositionally biased stretch (pro residues) spans 265-275 (PELPSSPPPGL). A TRAF6-binding motif is present at residues 299–309 (NYPVECTEGSA). Residues 347–369 (KPCPPTPTTPETSPPPPPPPPSS) are compositionally biased toward pro residues. Residues 393 to 553 (KFYNFVILHA…QDTRALREQS (161 aa)) form the TIR domain. Residues 512 to 712 (RLDEHSQIFA…APEDKTQEAE (201 aa)) are sufficient to induce apoptosis. 2 stretches are compositionally biased toward pro residues: residues 620–633 (PFPT…PPPL) and 640–649 (TPPPPSPQPA). The tract at residues 620 to 677 (PFPTWPGCPQPPPLHAWQAGTPPPPSPQPAAFPQSLPFPQSPAFPTASPAPPQSPGLQ) is disordered. Low complexity predominate over residues 650–666 (AFPQSLPFPQSPAFPTA).

In terms of assembly, homodimer. Found in a multi-helicase-TICAM1 complex at least composed of DHX36, DDX1, DDX21 and TICAM1; this complex exists in resting cells with or without poly(I:C) RNA ligand stimulation. Interacts (via TIR domain) with DDX21 (via C-terminus). Interacts (via TIR domain) with DHX36 (via C-terminus). Interacts with AZI2 and IRF7. Interacts with TICAM2 in TLR4 recruitment. Interaction with PIAS4 inhibits the TICAM1-induced NF-kappa-B, IRF and IFNB1 activation. Interacts with IKBKB and IKBKE. Interaction with SARM1 blocks TICAM1-dependent transcription factor activation. Interacts with TRAF3. Interacts (when phosphorylated) with IRF3; following activation and phosphorylation on the pLxIS motif by TBK1, recruits IRF3. Interacts with TBK1, TRAF6 and RIPK1 and these interactions are enhanced in the presence of WDFY1. Interacts with TRAFD1. Interacts with UBQLN1 (via UBA domain). Interacts with TLR4. Interacts with WDFY1 in response to poly(I:C). Interacts (via the TIR domain) with TLR3 in response to poly(I:C) and this interaction is enhanced in the presence of WDFY1. Interacts with TRIM56. Component of a multi-helicase-TICAM1 complex that acts as a cytoplasmic sensor of viral double-stranded RNA (dsRNA) and plays a role in the activation of a cascade of antiviral responses including the induction of pro-inflammatory cytokines. Interacts (via the TIR domain) with TLR5. Interacts with TRIM8. Interacts with TAX1BP1 and TRIM32; these interactions target TICAM1 to TAX1BP1-mediated selective autophagic degradation. Interacts with DDX50. As to quaternary structure, (Microbial infection) Interacts with hepatitis C virus (HCV) NS3/4A protease; this interaction leads to TICAM1 cleavage, thereby disrupting TLR3 signaling and preventing the establishment of an antiviral state. (Microbial infection) Interacts with Seneca Valley virus protease 3C; this interaction allows the cleavage of TICAM1/TRIF and subsequent suppression of host innate immunity. In terms of assembly, (Microbial infection) Interacts (via C-terminus) with coxsackievirus B3 (CVB3) protease 3C. Post-translationally, phosphorylated by TBK1. Following activation, phosphorylated by TBK1 at Ser-210 in the pLxIS motif. The phosphorylated pLxIS motif constitutes an IRF3-binding motif, leading to recruitment of the transcription factor IRF3 to induce type-I interferons and other cytokines. Polyubiquitinated at Lys-229 by TRIM38 with 'Lys-48'-linked chains, leading to proteasomal degradation. Polyubiquitinated with 'Lys-6'- and 'Lys-33'-linked chains in a TRIM8-dependent manner; ubiquitination disrupts the interaction with TBK1 and subsequent interferon production. In terms of processing, (Microbial infection) Cleaved and degraded by hepatitis A virus (HAV) protein 3CD allowing the virus to disrupt host TLR3 signaling. Post-translationally, (Microbial infection) Cleaved by CVB3 protease 3C allowing the virus to disrupt host TLR3 signaling. (Microbial infection) Cleaved by Seneca Valley virus protease 3C allowing the virus to disrupt host TLR3 signaling. In terms of processing, (Microbial infection) Cleaved by protease 3C of human enterovirus D68 (EV68) allowing the virus to disrupt host TLR3 signaling. Post-translationally, (Microbial infection) Cleaved by HCV protease NS3/4A, thereby disrupting TLR3 signaling and preventing the establishment of an antiviral state. As to expression, ubiquitously expressed but with higher levels in liver.

It localises to the cytoplasmic vesicle. The protein resides in the autophagosome. It is found in the cytoplasm. Its subcellular location is the cytosol. The protein localises to the mitochondrion. In terms of biological role, involved in innate immunity against invading pathogens. Adapter used by TLR3, TLR4 (through TICAM2) and TLR5 to mediate NF-kappa-B and interferon-regulatory factor (IRF) activation, and to induce apoptosis. Ligand binding to these receptors results in TRIF recruitment through its TIR domain. Distinct protein-interaction motifs allow recruitment of the effector proteins TBK1, TRAF6 and RIPK1, which in turn, lead to the activation of transcription factors IRF3 and IRF7, NF-kappa-B and FADD respectively. Phosphorylation by TBK1 on the pLxIS motif leads to recruitment and subsequent activation of the transcription factor IRF3 to induce expression of type I interferon and exert a potent immunity against invading pathogens. Component of a multi-helicase-TICAM1 complex that acts as a cytoplasmic sensor of viral double-stranded RNA (dsRNA) and plays a role in the activation of a cascade of antiviral responses including the induction of pro-inflammatory cytokines. The polypeptide is TIR domain-containing adapter molecule 1 (TICAM1) (Homo sapiens (Human)).